Here is a 215-residue protein sequence, read N- to C-terminus: Ribose-5-phosphate isomerase A (215 aa).

Residues Thr26 to Thr29, Asp79 to Asp82, and Lys92 to Gly95 contribute to the substrate site. Glu101 (proton acceptor) is an active-site residue. Position 119 (Lys119) interacts with substrate.

It belongs to the ribose 5-phosphate isomerase family. As to quaternary structure, homodimer.

It catalyses the reaction aldehydo-D-ribose 5-phosphate = D-ribulose 5-phosphate. The protein operates within carbohydrate degradation; pentose phosphate pathway; D-ribose 5-phosphate from D-ribulose 5-phosphate (non-oxidative stage): step 1/1. Its function is as follows. Catalyzes the reversible conversion of ribose-5-phosphate to ribulose 5-phosphate. The chain is Ribose-5-phosphate isomerase A from Xanthomonas campestris pv. campestris (strain 8004).